Reading from the N-terminus, the 448-residue chain is MGKEKIHISIVVIGHVDSGKSTTTGHLIYKLGGIDKRVIERFEKEAAEMNKRSFKYAWVLDKLKAERERGITIDIALWKFETTKYYCTVIDAPGHRDFIKNMITGTSQADCAVLIIDSTTGGFEAGISKDGQTREHALLAFTLGVKQMICCCNKMDATTPKYSKARYDEIVKEVSSYLKKVGYNPDKIPFVPISGFEGDNMIERSTNLDWYKGPTLLEALDQINEPKRPSDKPLRLPLQDVYKIGGIGTVPVGRVETGVIKPGMVVTFGPTGLTTEVKSVEMHHEALQEALPGDNVGFNVKNVAVKDLKRGYVASNSKDDPAKGAASFTAQVIIMNHPGQIGNGYAPVLDCHTSHIAVKFAEILTKIDRRSGKELEKEPKFLKNGDAGMVKMIPTKPMVVETFAEYPPLGRFAVRDMRQTVAVGVVKNVDKKDPTGAKVTKAAQKKGK.

Residues 5–230 (KIHISIVVIG…DQINEPKRPS (226 aa)) form the tr-type G domain. The G1 stretch occupies residues 14-21 (GHVDSGKS). Residue 14–21 (GHVDSGKS) coordinates GTP. Lys-55 bears the N6,N6-dimethyllysine mark. A G2 region spans residues 70–74 (GITID). At Lys-79 the chain carries N6,N6,N6-trimethyllysine. Positions 91 to 94 (DAPG) are G3. GTP-binding positions include 91-95 (DAPGH) and 153-156 (NKMD). A G4 region spans residues 153-156 (NKMD). Lys-187 carries the N6,N6,N6-trimethyllysine modification. Residues 194–196 (SGF) are G5. Lys-261 is modified (N6-methyllysine). Glu-289 is modified (5-glutamyl glycerylphosphorylethanolamine). Lys-306 carries the post-translational modification N6,N6,N6-trimethyllysine. A 5-glutamyl glycerylphosphorylethanolamine modification is found at Glu-362. Residue Lys-396 is modified to N6,N6,N6-trimethyllysine.

Belongs to the TRAFAC class translation factor GTPase superfamily. Classic translation factor GTPase family. EF-Tu/EF-1A subfamily.

It localises to the cytoplasm. Its function is as follows. This protein promotes the GTP-dependent binding of aminoacyl-tRNA to the A-site of ribosomes during protein biosynthesis. In Solanum lycopersicum (Tomato), this protein is Elongation factor 1-alpha.